A 207-amino-acid polypeptide reads, in one-letter code: Ribosomal RNA large subunit methyltransferase E (207 aa).

S-adenosyl-L-methionine is bound by residues G60, W62, D80, D96, and D121. The active-site Proton acceptor is K161.

Belongs to the class I-like SAM-binding methyltransferase superfamily. RNA methyltransferase RlmE family.

The protein localises to the cytoplasm. It carries out the reaction uridine(2552) in 23S rRNA + S-adenosyl-L-methionine = 2'-O-methyluridine(2552) in 23S rRNA + S-adenosyl-L-homocysteine + H(+). In terms of biological role, specifically methylates the uridine in position 2552 of 23S rRNA at the 2'-O position of the ribose in the fully assembled 50S ribosomal subunit. The polypeptide is Ribosomal RNA large subunit methyltransferase E (Pseudomonas paraeruginosa (strain DSM 24068 / PA7) (Pseudomonas aeruginosa (strain PA7))).